Here is a 1293-residue protein sequence, read N- to C-terminus: MISLRGSAALSPFRIEKILAALKGSAPRITHLYAEFWHFAWSDQPLSEAQQEVLKQILTYGPRMSEEAPAGELFLVIPRPGTISPWSSRATDIARHCGIEAIQRLERGIAFYAATADGSPLTDAEKAALRPLIHDRMTEAVFASLTDAQKLYHTAEPAPLSTVDILSGGKAALEAANAEMGLALSPDEVDYLIENFQRMGRNPTDVELMMFAQANSEHCRHKIFNADWVIDGVAQAQSLFGMIRNTHKLNPGKTVVAYADNASIVEGGKTKRFYPLADGQYGFVEEDMHFLMKVETHNHPTAISPFAGAATGAGGEIRDEGATGSGSKPKAGLTGFSVSNLHIPGFKQPWEHNNGKPDRIASALQIMVDGPLGGAAYNNEFGRPNIAGYFRTLEIESAGEIRGYHKPIMLAGGVGNISARHAKKNPIPPGAALIQLGGPAMLIGLGGGAASSMDTGANTENLDFDSVQRGNPELERRAQEVIDRCWQLGDKNPILSIHDVGAGGISNAFPELVNDAGVGARFQLRDVHNEEPGMSPREIWSNEAQERYVMAVRKEDLPLFAEICERERCPFAVVGEATEEKRLVVSDRHFGNTPVDMDLSVLLGKPPKMTRDVQHVARELPAFDHSRIDLKEAAQRVLRLPGVADKTFLITIGDRSVTGMIARDQMVGPWQVPVADVAVTLDGFETYRGEAFAIGEKAPLALIDAPASGRMAIGEAITNIAASLIEDIADLKLSANWMAPAGHPGEDAALFDTVKAVGMELCPQLGISIPVGKDSMSMKTVWEERNEKKAVTAPISLVVTAFAPTADARKTLTPQLRTDLGDTRLLLIDLGAGRNRLGGSALAQVYGSVGNVAPDVEDADSLKHFFNAVQKLNREGRLLAYHDRSDGGLFATVVEMAFAGRTGLELDIASLGEDAVAVLYNEELGAVLQVRAADLDAITAELETTLRGKVHVIGAPASHGDIVIRQGTKLVFAESRVALHRAWSETTYQMQKLRDNPVCAQQEYDRLLDERDAGLHAKLTFDINENIAAPYIASGARPKMAILREQGVNGQVEMAAAFDRAGFNAFDVHMSDIISGRVSLKDFAGFVACGGFSYGDVLGAGEGWAKSILFNPRARDEFTAFFNRTDSFALGVCNGCQMMSNLHSIIPGAGHWPHFVRNRSEQFEARVAMVEVLDSPSLFFNGMAGSRMPIAVAHGEGYAEFADAAAQQRAQDARLVTLRYVDNSGLPTEVYPFNPNGSPQGITGLTTADGRFSIMMPHPERVFRTVQHSWHPDGWGEDGPWIRMFRNARKFIG.

ATP is bound by residues Gly-308 to Asp-319 and Ala-675. Asp-676, Glu-715, Asn-719, and Asp-883 together coordinate Mg(2+). Ser-885 contributes to the ATP binding site. One can recognise a Glutamine amidotransferase type-1 domain in the interval Met-1040–Gly-1293. The active-site Nucleophile is Cys-1133. Active-site residues include His-1258 and Glu-1260.

This sequence in the N-terminal section; belongs to the FGAMS family. As to quaternary structure, monomer.

Its subcellular location is the cytoplasm. The catalysed reaction is N(2)-formyl-N(1)-(5-phospho-beta-D-ribosyl)glycinamide + L-glutamine + ATP + H2O = 2-formamido-N(1)-(5-O-phospho-beta-D-ribosyl)acetamidine + L-glutamate + ADP + phosphate + H(+). The protein operates within purine metabolism; IMP biosynthesis via de novo pathway; 5-amino-1-(5-phospho-D-ribosyl)imidazole from N(2)-formyl-N(1)-(5-phospho-D-ribosyl)glycinamide: step 1/2. Its function is as follows. Phosphoribosylformylglycinamidine synthase involved in the purines biosynthetic pathway. Catalyzes the ATP-dependent conversion of formylglycinamide ribonucleotide (FGAR) and glutamine to yield formylglycinamidine ribonucleotide (FGAM) and glutamate. The protein is Phosphoribosylformylglycinamidine synthase of Methylobacillus flagellatus (strain ATCC 51484 / DSM 6875 / VKM B-1610 / KT).